The following is a 376-amino-acid chain: O-demethylpuromycin-O-methyltransferase (376 aa).

The segment at 1-28 is disordered; that stretch reads MAPTEATRGGPADPAPAPEAHRGGHTEH. Positions 19 to 28 are enriched in basic and acidic residues; sequence EAHRGGHTEH. Residues Asp235 and 261 to 263 each bind S-adenosyl-L-methionine; that span reads GDF. The active-site Proton acceptor is His281.

It belongs to the class I-like SAM-binding methyltransferase superfamily. Cation-independent O-methyltransferase family.

It carries out the reaction O-demethylpuromycin + S-adenosyl-L-methionine = puromycin + S-adenosyl-L-homocysteine + H(+). The polypeptide is O-demethylpuromycin-O-methyltransferase (dmpM) (Streptomyces alboniger).